The sequence spans 206 residues: Bis(5'-adenosyl)-triphosphatase (206 aa).

An HIT domain is found at Lys3 to Tyr115. Residues His96 to His100 carry the Histidine triad motif motif. The active-site Tele-AMP-histidine intermediate is the His98. Residues Arg143–Pro164 are disordered.

In terms of assembly, homodimer. Mn(2+) is required as a cofactor.

Its subcellular location is the cytoplasm. The protein resides in the nucleus. The protein localises to the mitochondrion. It catalyses the reaction P(1),P(3)-bis(5'-adenosyl) triphosphate + H2O = AMP + ADP + 2 H(+). In terms of biological role, cleaves A-5'-PPP-5'A to yield AMP and ADP. Can cleave all dinucleoside polyphosphates, provided the phosphate chain contains at least 3 phosphates and that 1 of the 2 bases composing the nucleotide is a purine. Is most effective on dinucleoside triphosphates. Negatively regulates intracellular dinucleoside polyphosphate levels, which elevate following heat shock. This Saccharomyces cerevisiae (strain RM11-1a) (Baker's yeast) protein is Bis(5'-adenosyl)-triphosphatase (HNT2).